Reading from the N-terminus, the 178-residue chain is Cyclin-dependent kinase inhibitor 1B (178 aa).

Residues 1-11 (MSNVRVSNGSP) show a composition bias toward polar residues. Residues 1–31 (MSNVRVSNGSPSLERMDARQAEYPKPSACRN) are disordered. Position 10 is a phosphoserine; by UHMK1 (Ser-10). The tract at residues 51 to 91 (DMEEASQRKWNFDFQNHKPLEGKYEWQEVEKGSLPEFYYRP) is interaction with CDK2. The residue at position 74 (Tyr-74) is a Phosphotyrosine; by SRC. The tract at residues 87 to 178 (FYYRPPRPPK…RTEENVSDGS (92 aa)) is disordered. The residue at position 88 (Tyr-88) is a Phosphotyrosine; by ABL, LYN, SRC and JAK2. Tyr-89 is modified (phosphotyrosine). A compositionally biased stretch (polar residues) spans 104-113 (QESQDVSGTR). Basic and acidic residues predominate over residues 126–137 (EDTHLVDQKTDT). The Nuclear localization signal signature appears at 153-169 (KRPATDDSSPQNKRANR). A Phosphothreonine; by CaMK1, PKB/AKT1, RPS6KA1, RPS6KA3 and PIM1 modification is found at Thr-157. Thr-170 carries the post-translational modification Phosphothreonine.

It belongs to the CDI family. As to quaternary structure, forms a ternary complex composed of CCNE1, CDK2 and CDKN1B. Interacts directly with CCNE1; the interaction is inhibited by CDK2-dependent phosphorylation. Interacts with COPS5, subunit of the COP9 signalosome complex; the interaction leads to CDKN1B degradation. Interacts with NUP50; the interaction leads to nuclear import and degradation of phosphorylated CDKN1B. Interacts with CCND1 and SNX6. Interacts (Thr-198-phosphorylated form) with 14-3-3 proteins, binds strongly YWHAQ, weakly YWHAE and YWHAH, but not YWHAB nor YWHAZ; the interaction with YWHAQ results in translocation to the cytoplasm. Interacts with AKT1 and LYN; the interactions lead to cytoplasmic mislocation, phosphorylation of CDKN1B and inhibition of cell cycle arrest. Forms a ternary complex with CCNA2 and CDK2; CDKN1B inhibits the kinase activity of CDK2 through conformational rearrangements. Interacts (unphosphorylated form) with CDK2. Forms a complex with CDK2 and SPDYA, but does not directly interact with SPDYA. Forms a ternary complex composed of cyclin D, CDK4 and CDKN1B. Interacts (phosphorylated on Tyr-88 and Tyr-89) with CDK4; the interaction is required for cyclin D and CDK4 complex assembly, induces nuclear translocation and activates the CDK4 kinase activity. Interacts with GRB2. Interacts with PIM1. Identified in a complex with SKP1, SKP2 and CKS1B. Interacts with UHMK1; the interaction leads to cytoplasmic mislocation, phosphorylation of CDKN1B and inhibition of cell cycle arrest. Also interacts with CDK1. Dephosphorylated by PPM1H, leading to CDKN1B stability. In terms of processing, phosphorylated; phosphorylation occurs on serine, threonine and tyrosine residues. Phosphorylation on Ser-10 is the major site of phosphorylation in resting cells, takes place at the G(0)-G(1) phase and leads to protein stability. Phosphorylation on other sites is greatly enhanced by mitogens, growth factors, MYC and in certain cancer cell lines. The phosphorylated form found in the cytoplasm is inactivate. Phosphorylation on Tyr-88 has no effect on binding CDK complexes. Ubiquitinated; in the cytoplasm by the KPC complex (composed of RNF123/KPC1 and UBAC1/KPC2) and, in the nucleus, by SCF(SKP2). The latter requires prior phosphorylation on Thr-187. Ubiquitinated; by a TRIM21-containing SCF(SKP2)-like complex; leads to its degradation. Post-translationally, subject to degradation in the lysosome. Interaction with SNX6 promotes lysosomal degradation.

The protein localises to the nucleus. It is found in the cytoplasm. The protein resides in the endosome. Important regulator of cell cycle progression. Inhibits the kinase activity of CDK2 bound to cyclin A, but has little inhibitory activity on CDK2 bound to SPDYA. Involved in G1 arrest. Potent inhibitor of cyclin E- and cyclin A-CDK2 complexes. Forms a complex with cyclin type D-CDK4 complexes and is involved in the assembly, stability, and modulation of CCND1-CDK4 complex activation. Acts either as an inhibitor or an activator of cyclin type D-CDK4 complexes depending on its phosphorylation state and/or stoichometry. The sequence is that of Cyclin-dependent kinase inhibitor 1B (CDKN1B) from Neovison vison (American mink).